The chain runs to 153 residues: Glucose-6-phosphate 1-dehydrogenase (153 aa).

Arg21 and Lys120 together coordinate NADP(+). Residue Lys120 participates in D-glucose 6-phosphate binding.

The protein belongs to the glucose-6-phosphate dehydrogenase family.

The protein localises to the cytoplasm. The protein resides in the cytosol. It catalyses the reaction D-glucose 6-phosphate + NADP(+) = 6-phospho-D-glucono-1,5-lactone + NADPH + H(+). It participates in carbohydrate degradation; pentose phosphate pathway; D-ribulose 5-phosphate from D-glucose 6-phosphate (oxidative stage): step 1/3. Cytosolic glucose-6-phosphate dehydrogenase that catalyzes the first and rate-limiting step of the oxidative branch within the pentose phosphate pathway/shunt, an alternative route to glycolysis for the dissimilation of carbohydrates and a major source of reducing power and metabolic intermediates for fatty acid and nucleic acid biosynthetic processes. The chain is Glucose-6-phosphate 1-dehydrogenase (ZW) from Sarcophaga bullata (Grey flesh fly).